The primary structure comprises 246 residues: Probable transcriptional regulatory protein ACP_0521 (246 aa).

Belongs to the TACO1 family.

The protein resides in the cytoplasm. This is Probable transcriptional regulatory protein ACP_0521 from Acidobacterium capsulatum (strain ATCC 51196 / DSM 11244 / BCRC 80197 / JCM 7670 / NBRC 15755 / NCIMB 13165 / 161).